Consider the following 434-residue polypeptide: Serine hydroxymethyltransferase (434 aa).

(6S)-5,6,7,8-tetrahydrofolate contacts are provided by residues Leu-133 and 137–139; that span reads GHL. Lys-242 carries the post-translational modification N6-(pyridoxal phosphate)lysine.

It belongs to the SHMT family. Homodimer. The cofactor is pyridoxal 5'-phosphate.

It localises to the cytoplasm. The enzyme catalyses (6R)-5,10-methylene-5,6,7,8-tetrahydrofolate + glycine + H2O = (6S)-5,6,7,8-tetrahydrofolate + L-serine. Its pathway is one-carbon metabolism; tetrahydrofolate interconversion. It participates in amino-acid biosynthesis; glycine biosynthesis; glycine from L-serine: step 1/1. Its function is as follows. Catalyzes the reversible interconversion of serine and glycine with tetrahydrofolate (THF) serving as the one-carbon carrier. This reaction serves as the major source of one-carbon groups required for the biosynthesis of purines, thymidylate, methionine, and other important biomolecules. Also exhibits THF-independent aldolase activity toward beta-hydroxyamino acids, producing glycine and aldehydes, via a retro-aldol mechanism. This chain is Serine hydroxymethyltransferase, found in Methylobacterium radiotolerans (strain ATCC 27329 / DSM 1819 / JCM 2831 / NBRC 15690 / NCIMB 10815 / 0-1).